A 253-amino-acid chain; its full sequence is Histone-arginine methyltransferase METTL23 (253 aa).

The disordered stretch occupies residues methionine 1–threonine 23.

Belongs to the methyltransferase superfamily. METTL23 family. Interacts with HSPA5, HSP90B1, TUBULIN, UGGT1 and UGGT2. Interacts with TET3. Interacts with STPG4. Ubiquitously expressed.

It is found in the nucleus. The protein resides in the cytoplasm. The enzyme catalyses L-arginyl-[protein] + 2 S-adenosyl-L-methionine = N(omega),N(omega)-dimethyl-L-arginyl-[protein] + 2 S-adenosyl-L-homocysteine + 2 H(+). Histone methyltransferase that dimethylates histone H3 at 'Arg-17', forming asymmetric dimethylarginine (H3R17me2a), leading to activate transcription via chromatin remodeling. Maternal factor involved in epigenetic chromatin reprogramming of the paternal genome in the zygote: mediates H3R17me2a, promoting histone H3.3 incorporation in the male pronucleus, leading to TET3 recruitment and subsequent DNA demethylation. In Mus musculus (Mouse), this protein is Histone-arginine methyltransferase METTL23.